We begin with the raw amino-acid sequence, 375 residues long: Sulfite efflux pump SSU1 (375 aa).

At 1–25 (MPSGSGFQNIEEAGEKARRRDDWIA) the chain is on the cytoplasmic side. Residues 26–46 (ISNFHPGWFSVNMGTGITAIL) form a helical membrane-spanning segment. Residues 47-59 (LQNLPYQFPGLHY) are Extracellular-facing. Residues 60 to 80 (IAVVLFVLNVIIFFFFLTISI) form a helical membrane-spanning segment. Topologically, residues 81–101 (TRYALWPEKFKAMLAHPAHSM) are cytoplasmic. Residues 102–122 (LLGTFPMGFATIINCIIFICV) form a helical membrane-spanning segment. The Extracellular segment spans residues 123–135 (PVWGDWAARFAWG). Residues 136 to 156 (LWWVDATVSIAICYFVPFMLM) form a helical membrane-spanning segment. Topologically, residues 157 to 167 (TKHTSSLETMT) are cytoplasmic. The helical transmembrane segment at 168 to 188 (AAWLLPIVAPVVAAASGGVVA) threads the bilayer. At 189 to 200 (DALKNDTHALIT) the chain is on the extracellular side. N193 carries an N-linked (GlcNAc...) asparagine glycan. The chain crosses the membrane as a helical span at residues 201–221 (ILVCYVMWGSAVPLAMVILVI). Residues 222 to 234 (YFQRLALHKLVPR) lie on the Cytoplasmic side of the membrane. A helical membrane pass occupies residues 235 to 255 (AAIVSALLPIGPLGQGGFGLM). Residues 256–277 (QLGVVARRVFPRLDFLAPIAGE) are Extracellular-facing. Residues 278–298 (IFYVMGAFIAMIMWGFGLIWL) form a helical membrane-spanning segment. Residues 299–309 (WFALASFTRGK) are Cytoplasmic-facing. The chain crosses the membrane as a helical span at residues 310–330 (FYFNIGWWAFTFPLGVFTTAT). Residues 331–343 (TQMGKEFNSVVFD) are Extracellular-facing. A helical membrane pass occupies residues 344–364 (VLGTFFSIVVAAMWVMVFALT). Residues 365 to 375 (VYKSCTKELFK) are Cytoplasmic-facing.

Belongs to the tellurite-resistance/dicarboxylate transporter (TDT) family.

The protein resides in the cell membrane. Functionally, sulphite efflux pump required for the secretion of sulphite as a reducing agent. In the presence of sulphite, cystine in keratin is directly cleaved to cysteine and S-sulphocysteine, and thereby, reduced proteins become accessible to hydrolysis by a variety of secreted endo- and exoproteases. Excretion of sulphite mediated by an efflux pump also represents a detoxification pathway for dermatophytes during infection of the epidermal stratum corneum, hair and nails, which are rich in cysteine. The protein is Sulfite efflux pump SSU1 (SSU1) of Arthroderma otae (strain ATCC MYA-4605 / CBS 113480) (Microsporum canis).